The following is a 570-amino-acid chain: Ferroportin (570 aa).

Residues 1–23 (MTKARDQTHQEGCCGSLANYLTS) are Cytoplasmic-facing. Residues 24 to 53 (AKFLLYLGHSLSTWGDRMWHFAVSVFLVEL) traverse the membrane as a helical segment. Residues Asp-39 and His-43 each coordinate Fe cation. Residues 54-57 (YGNS) lie on the Extracellular side of the membrane. A helical transmembrane segment spans residues 58–84 (LLLTAVYGLVVAGSVLVLGAIIGDWVD). At 85 to 87 (KNA) the chain is on the cytoplasmic side. Residues 88-118 (RLKVAQTSLVVQNVSVILCGIILMMVFLHKN) form a helical membrane-spanning segment. Topologically, residues 119–126 (ELLTMYHG) are extracellular. The chain crosses the membrane as a helical span at residues 127–162 (WVLTVCYILIITIANIANLASTATAITIQRDWIVVV). Over 163 to 164 (AG) the chain is Cytoplasmic. The helical transmembrane segment at 165–195 (ENRSRLADMNATIRRIDQLTNILAPMAVGQI) threads the bilayer. Topologically, residues 196-202 (MTFGSPV) are extracellular. Residues 203 to 229 (IGCGFISGWNLVSMCVEYFLLWKVYQK) traverse the membrane as a helical segment. The Cytoplasmic portion of the chain corresponds to 230 to 306 (TPALAVKAAL…DGWVSYYNQP (77 aa)). The helical transmembrane segment at 307 to 333 (VFLAGMGLAFLYMTVLGFDCITTGYAY) threads the bilayer. Residue Cys-326 coordinates Fe cation. The Extracellular portion of the chain corresponds to 334–338 (TQGLS). Residues 339-366 (GSILSILMGASAITGIMGTVAFTWLRRK) traverse the membrane as a helical segment. Residues 367–368 (CG) lie on the Cytoplasmic side of the membrane. The chain crosses the membrane as a helical span at residues 369-391 (LVRTGLFSGLAQLSCLILCVISV). The Extracellular segment spans residues 392-452 (FMPGSPLDLS…EMSTKPIPIV (61 aa)). Asn-437 carries N-linked (GlcNAc...) asparagine glycosylation. A helical membrane pass occupies residues 453–482 (SVSLLFAGVIAARIGLWSFDLTVTQLLQEN). The Cytoplasmic portion of the chain corresponds to 483–487 (VIESE). Residues 488 to 512 (RGIINGVQNSMNYLLDLLHFIMVIL) form a helical membrane-spanning segment. His-506 is a binding site for Fe cation. At 513-515 (APN) the chain is on the extracellular side. A helical transmembrane segment spans residues 516–541 (PEAFGLLVLISVSFVAMGHLMYFRFA). Residues 542–570 (QKTLGNQIFVCGPDEKEVTDENQPNTSVV) are Cytoplasmic-facing.

The protein belongs to the ferroportin (FP) (TC 2.A.100) family. SLC40A subfamily. As to quaternary structure, identified in a complex with STOM. Interacts with HAMP; affinity of the peptide hormone HAMP for SLC40A1 increases by 80-fold in the presence of iron and the interaction promotes SLC40A1 ubiquitination and degradation. Part of a complex composed of SLC40A1/ferroportin, TF/transferrin and HEPH/hephaestin that transfers iron from cells to transferrin. In terms of processing, polyubiquitinated by RNF217; leading to proteasomal degradation. Under conditions of high systemic iron levels, both the hormone peptide hepcidin/HAMP and holo(iron bound)-transferrin/TF induce the ubiquitination, internalization and proteasomal degradation of SLC40A1 to control iron release from cells. High expression in spleen, liver, kidney, heart and duodenum.

Its subcellular location is the cell membrane. It is found in the basolateral cell membrane. The enzyme catalyses Fe(2+)(in) = Fe(2+)(out). Transports Fe(2+) from the inside of a cell to the outside of the cell, playing a key role for maintaining systemic iron homeostasis. Transports iron from intestinal, splenic, hepatic cells, macrophages and erythrocytes into the blood to provide iron to other tissues. Controls therefore dietary iron uptake, iron recycling by macrophages and erythrocytes, and release of iron stores in hepatocytes. When iron is in excess in serum, circulating HAMP/hepcidin levels increase resulting in a degradation of SLC40A1, thus limiting the iron efflux to plasma. The chain is Ferroportin from Mus musculus (Mouse).